Consider the following 797-residue polypeptide: LPS-assembly protein LptD (797 aa).

The first 30 residues, 1-30 (MKEGRKRLRAGYCYMLAGVVGVASTGSSRA), serve as a signal peptide directing secretion.

It belongs to the LptD family. As to quaternary structure, component of the lipopolysaccharide transport and assembly complex. Interacts with LptE and LptA.

Its subcellular location is the cell outer membrane. Its function is as follows. Together with LptE, is involved in the assembly of lipopolysaccharide (LPS) at the surface of the outer membrane. This is LPS-assembly protein LptD from Hahella chejuensis (strain KCTC 2396).